The following is a 381-amino-acid chain: Opsin Rh2 (381 aa).

The Extracellular segment spans residues Met1–Met56. A glycan (N-linked (GlcNAc...) asparagine) is linked at Asn27. The helical transmembrane segment at Ser57–Ile81 threads the bilayer. The Cytoplasmic segment spans residues Phe82–Asn93. A helical transmembrane segment spans residues Leu94–Tyr119. Over Tyr120 to Tyr133 the chain is Extracellular. Cys130 and Cys207 form a disulfide bridge. Residues Ala134–Phe153 form a helical membrane-spanning segment. The Cytoplasmic segment spans residues Asp154–Thr172. The chain crosses the membrane as a helical span at residues Ser173–Ser196. Over Ala197–Ser220 the chain is Extracellular. Residues Tyr221–Val248 form a helical membrane-spanning segment. The Cytoplasmic portion of the chain corresponds to Ala249 to Lys283. A helical transmembrane segment spans residues Val284–Leu307. The Extracellular portion of the chain corresponds to Phe308–Thr314. Residues Pro315 to Ser339 traverse the membrane as a helical segment. Position 326 is an N6-(retinylidene)lysine (Lys326). The Cytoplasmic segment spans residues His340–Ala381. Residues Thr359 to Ala381 form a disordered region. Polar residues predominate over residues Asp370 to Ala381.

Belongs to the G-protein coupled receptor 1 family. Opsin subfamily. Post-translationally, phosphorylated on some or all of the serine and threonine residues present in the C-terminal region. As to expression, predominant opsin expressed in the dorsal ocelli.

Its subcellular location is the membrane. Functionally, visual pigments are the light-absorbing molecules that mediate vision. They consist of an apoprotein, opsin, covalently linked to cis-retinal. The polypeptide is Opsin Rh2 (Rh2) (Drosophila melanogaster (Fruit fly)).